The sequence spans 1755 residues: Gag-Pro-Pol polyprotein (1755 aa).

A lipid anchor (N-myristoyl glycine; by host) is attached at Gly2. Composition is skewed to basic and acidic residues over residues 151-169 and 178-191; these read YDEP…EKDH and QRKE…KEKD. Residues 151–191 are disordered; the sequence is YDEPYEEKEKADKNEEKDHVRKIKKVVQRKENSEGKRKEKD. The PTAP/PSAP motif motif lies at 305–308; that stretch reads PSAP. CCHC-type zinc fingers lie at residues 525–542 and 552–569; these read PVCF…DCKD and GLCP…ECKS. Positions 572–631 are disordered; it reads DKDGNPLPPLETNAENSKNLVKGQSPSPAQKGDGVKGSGLNPEAPPFTIHDLPRGTPGSA. Polar residues predominate over residues 584 to 599; that stretch reads NAENSKNLVKGQSPSP. A Peptidase A2 domain is found at 766–841; sequence FLGLLDTGAD…LPFTLWGRDI (76 aa). Asp771 serves as the catalytic Protease; shared with dimeric partner. The 189-residue stretch at 905 to 1093 folds into the Reverse transcriptase domain; it reads LQLGHLEESN…DNLKYLGTHI (189 aa). Mg(2+) contacts are provided by Asp970, Asp1045, Asp1046, Asp1316, Glu1346, Asp1366, and Asp1429. In terms of domain architecture, RNase H type-1 spans 1307–1437; that stretch reads LEKGIVIFTD…ADSLTRILTA (131 aa). The Integrase-type zinc-finger motif lies at 1436 to 1477; that stretch reads TALESAQESHALHHQNAAALRFQFHITREQAREIVKLCPNCP. Zn(2+) is bound by residues His1445, His1449, Cys1473, and Cys1476. The Integrase catalytic domain occupies 1490–1647; it reads RGLKPRVLWQ…TAAERHWGPI (158 aa). The Mg(2+) site is built by Asp1501, Asp1558, and Glu1594. A DNA-binding region (integrase-type) is located at residues 1653–1702; the sequence is PMVMWKDLLTGSWKGPDVLITAGRGYACVFPQDAETPIWVPDRFIRPFTE. The interval 1699–1755 is disordered; that stretch reads PFTERKEATPTPGTAEKTPPRDEKDQQESPKNESSPHQREDGLATSAGVDLRSGGGP. Over residues 1716–1740 the composition is skewed to basic and acidic residues; it reads TPPRDEKDQQESPKNESSPHQREDG.

The protein belongs to the retroviral Pol polyprotein family. As to quaternary structure, homodimer; when myristoylated. Homodimer. In terms of assembly, homooctamer. As to quaternary structure, homotrimer. It depends on Mg(2+) as a cofactor. In terms of processing, specific enzymatic cleavages in vivo yield mature proteins. Post-translationally, released by autocatalytic processing. Myristoylated. Myristoylation of the matrix (MA) domain mediates the transport and binding of Gag polyproteins to the host plasma membrane and is required for the assembly of viral particles.

It is found in the virion. It catalyses the reaction DNA(n) + a 2'-deoxyribonucleoside 5'-triphosphate = DNA(n+1) + diphosphate. The enzyme catalyses Endonucleolytic cleavage to 5'-phosphomonoester.. The catalysed reaction is dUTP + H2O = dUMP + diphosphate + H(+). Inhibited by pepstatin A. Functionally, matrix protein. Nucleocapsid protein p14: Binds strongly to viral nucleic acids and promote their aggregation. Also destabilizes the nucleic acids duplexes via highly structured zinc-binding motifs. Its function is as follows. Capsid protein. In terms of biological role, NC-dUTPase has dUTPase activity, thereby preventing incorporation of uracil into DNA. Functionally, the aspartyl protease mediates proteolytic cleavages of Gag and Gag-Pol polyproteins during or shortly after the release of the virion from the plasma membrane. Cleavages take place as an ordered, step-wise cascade to yield mature proteins. This process is called maturation. Displays maximal activity during the budding process just prior to particle release from the cell. RT is a multifunctional enzyme that converts the viral dimeric RNA genome into dsDNA in the cytoplasm, shortly after virus entry into the cell. This enzyme displays a DNA polymerase activity that can copy either DNA or RNA templates, and a ribonuclease H (RNase H) activity that cleaves the RNA strand of RNA-DNA heteroduplexes in a partially processive 3' to 5' endonucleasic mode. Conversion of viral genomic RNA into dsDNA requires many steps. A tRNA binds to the primer-binding site (PBS) situated at the 5' end of the viral RNA. RT uses the 3' end of the tRNA primer to perfom a short round of RNA-dependent minus-strand DNA synthesis. The reading proceeds through the U5 region and ends after the repeated (R) region which is present at both ends of viral RNA. The portion of the RNA-DNA heteroduplex is digested by the RNase H, resulting in a ssDNA product attached to the tRNA primer. This ssDNA/tRNA hybridizes with the identical R region situated at the 3' end of viral RNA. This template exchange, known as minus-strand DNA strong stop transfer, can be either intra- or intermolecular. RT uses the 3' end of this newly synthesized short ssDNA to perfom the RNA-dependent minus-strand DNA synthesis of the whole template. RNase H digests the RNA template except for a polypurine tract (PPT) situated at the 5' end of the genome. It is not clear if both polymerase and RNase H activities are simultaneous. RNase H probably can proceed both in a polymerase-dependent (RNA cut into small fragments by the same RT performing DNA synthesis) and a polymerase-independent mode (cleavage of remaining RNA fragments by free RTs). Secondly, RT performs DNA-directed plus-strand DNA synthesis using the PPT that has not been removed by RNase H as primers. PPT and tRNA primers are then removed by RNase H. The 3' and 5' ssDNA PBS regions hybridize to form a circular dsDNA intermediate. Strand displacement synthesis by RT to the PBS and PPT ends produces a blunt ended, linear dsDNA copy of the viral genome that includes long terminal repeats (LTRs) at both ends. Its function is as follows. Catalyzes viral DNA integration into the host chromosome, by performing a series of DNA cutting and joining reactions. This is Gag-Pro-Pol polyprotein (gag-pro-pol) from Mus musculus (Mouse).